Reading from the N-terminus, the 284-residue chain is Nucleotide-binding protein Teth39_0666 (284 aa).

8–15 (GLSGAGKT) is an ATP binding site. 58–61 (DLRG) contacts GTP.

The protein belongs to the RapZ-like family.

Displays ATPase and GTPase activities. This chain is Nucleotide-binding protein Teth39_0666, found in Thermoanaerobacter pseudethanolicus (strain ATCC 33223 / 39E) (Clostridium thermohydrosulfuricum).